Here is a 704-residue protein sequence, read N- to C-terminus: DNA-directed DNA polymerase (704 aa).

Positions 1 to 187 (MIVSDIEANA…TKALLEKLLS (187 aa)) are 3'-5'exonuclease. Residues Asp5, Glu7, and Asp174 each coordinate Mg(2+). The interval 202-704 (GYTTFWSESL…KMGPNWAICH (503 aa)) is polymerase. A binding to host TrxA region spans residues 262-338 (GSWYQPKGGT…VEHVVFNPSS (77 aa)). Positions 475 and 476 each coordinate Mg(2+). Substrate is bound by residues His506, Arg518, Lys522, and Tyr526. Position 654 (Asp654) interacts with Mg(2+).

The protein belongs to the DNA polymerase type-A family. As to quaternary structure, composed of two subunits. One is encoded by the phage and the other is encoded by the host thioredoxin. Interacts with DNA primase/helicase; this interaction is essential for the coordination of DNA unwinding and nucleotide polymerization on duplex DNA. Interacts with the ssDNA-binding protein. Part of the replicase complex that includes the DNA polymerase, thioredoxin, the primase/helicase and the single-stranded DNA binding protein. Mg(2+) is required as a cofactor.

It catalyses the reaction DNA(n) + a 2'-deoxyribonucleoside 5'-triphosphate = DNA(n+1) + diphosphate. Its function is as follows. Replicates viral genomic DNA. This polymerase possesses two enzymatic activities: DNA synthesis (polymerase) and an exonucleolytic activity that degrades single-stranded DNA in the 3'-5' direction. Non-processive DNA polymerase that achieves processivity by binding to host thioredoxin (TrxA). This interaction increases the rate of dNTP incorporation to yield a processivity of approximately 800 nucleotides (nt) per binding event. Interacts with DNA helicase gp4 to coordinate nucleotide polymerization with unwinding of the DNA. The leading strand is synthesized continuously while synthesis of the lagging strand requires the synthesis of oligoribonucleotides by the primase domain of gp4. This is DNA-directed DNA polymerase from Escherichia phage T7 (Bacteriophage T7).